Reading from the N-terminus, the 121-residue chain is MRNWRWLLLVLAVLLAWLQYRFWFGPGNSGEVMMLEAQVAHQTQDNEGLRQRNQALAAEVKDLKDGEAAIEERARSELGMIKPGETFYRVVEDAPLPAPASAEASAPAQQAPEPVDPVDHP.

At 1-6 the chain is on the cytoplasmic side; the sequence is MRNWRW. Residues 7 to 24 traverse the membrane as a helical segment; it reads LLLVLAVLLAWLQYRFWF. The Periplasmic segment spans residues 25–121; it reads GPGNSGEVMM…PEPVDPVDHP (97 aa). A coiled-coil region spans residues 31–66; that stretch reads EVMMLEAQVAHQTQDNEGLRQRNQALAAEVKDLKDG. A disordered region spans residues 98 to 121; sequence APASAEASAPAQQAPEPVDPVDHP. Low complexity predominate over residues 99 to 113; sequence PASAEASAPAQQAPE.

It belongs to the FtsB family. In terms of assembly, part of a complex composed of FtsB, FtsL and FtsQ.

It is found in the cell inner membrane. Functionally, essential cell division protein. May link together the upstream cell division proteins, which are predominantly cytoplasmic, with the downstream cell division proteins, which are predominantly periplasmic. The sequence is that of Cell division protein FtsB from Xanthomonas axonopodis pv. citri (strain 306).